The chain runs to 810 residues: Protein 4.1 (810 aa).

Residues 1–124 (MTTEKSLVAE…KEIEFGTSLD (124 aa)) form a disordered region. Ser14 bears the Phosphoserine mark. Position 61 is a phosphothreonine (Thr61). The segment covering 62–76 (PTHEDLTKNKERTSE) has biased composition (basic and acidic residues). Residues Ser85, Ser86, Ser96, Ser105, Ser122, Ser150, Ser152, Ser153, Ser189, and Ser192 each carry the phosphoserine modification. Positions 102 to 118 (DVESAKEKCEGGQKEIE) are enriched in basic and acidic residues. The interval 152 to 203 (SSAETQPAQEEHREDPDFETKEGGGLEECSKIEVKEESPESKAERELKASQK) is disordered. Residues 160–200 (QEEHREDPDFETKEGGGLEECSKIEVKEESPESKAERELKA) show a composition bias toward basic and acidic residues. The 282-residue stretch at 211–492 (MHCKVSLLDD…EHHTFFRLTS (282 aa)) folds into the FERM domain. A Phosphotyrosine modification is found at Tyr223. Thr379 carries the post-translational modification Phosphothreonine. Positions 518 to 613 (TRQASALIDR…DQAEPEPTEV (96 aa)) are disordered. Phosphoserine is present on residues Ser522, Ser541, Ser543, and Ser555. Positions 587-601 (AQKETVKDEEKKEEG) are enriched in basic and acidic residues. The spectrin--actin-binding stretch occupies residues 615 to 659 (KDLDKSQEEIKKHHASISELKKNFMESVPEPRPSEWDKRLSTHSP). Phosphoserine is present on residues Ser620, Ser630, Ser655, and Ser658. The interval 660–810 (FRTLNINGQL…VHQETEISEE (151 aa)) is C-terminal (CTD). Phosphothreonine occurs at positions 682 and 805.

Binds with a high affinity to glycophorin and with lower affinity to band III protein. Associates with the nuclear mitotic apparatus. Binds calmodulin, CPAP and DLG1. Also found to associate with contractile apparatus and tight junctions. Interacts with NUMA1; this interaction is negatively regulated by CDK1 during metaphase and promotes for anaphase-specific localization of NUMA1 in symmetrically dividing cells. Interacts with ATP2B1; regulates small intestinal calcium absorption through regulation of membrane expression of ATP2B1. Post-translationally, O-glycosylated; contains N-acetylglucosamine side chains in the C-terminal domain. Phosphorylated at multiple sites by different protein kinases and each phosphorylation event selectively modulates the protein's functions.

The protein localises to the nucleus. Its subcellular location is the cytoplasm. It localises to the cytoskeleton. It is found in the cell cortex. Protein 4.1 is a major structural element of the erythrocyte membrane skeleton. It plays a key role in regulating membrane physical properties of mechanical stability and deformability by stabilizing spectrin-actin interaction. Recruits DLG1 to membranes. Required for dynein-dynactin complex and NUMA1 recruitment at the mitotic cell cortex during anaphase. The chain is Protein 4.1 from Canis lupus familiaris (Dog).